Reading from the N-terminus, the 336-residue chain is G patch domain and ankyrin repeat-containing protein 1 homolog (336 aa).

ANK repeat units follow at residues 123–152 and 156–185; these read FGWTALMMAACEGATEAVSWLVQRGVQVET and SGNTALKLAQRKGHLDVVHLLESLPILEET. In terms of domain architecture, G-patch spans 240–286; the sequence is AKNRGLQLMVKQGWDQEHGLGPSQSGRLYPVKTVLRKQRTGLGIEQQ.

The sequence is that of G patch domain and ankyrin repeat-containing protein 1 homolog from Drosophila melanogaster (Fruit fly).